Here is a 144-residue protein sequence, read N- to C-terminus: Transcriptional regulator MraZ (144 aa).

2 SpoVT-AbrB domains span residues 4–47 (EYKN…TADK) and 77–120 (AQEI…DLKQ).

This sequence belongs to the MraZ family. In terms of assembly, forms oligomers.

Its subcellular location is the cytoplasm. The protein localises to the nucleoid. In Treponema denticola (strain ATCC 35405 / DSM 14222 / CIP 103919 / JCM 8153 / KCTC 15104), this protein is Transcriptional regulator MraZ.